The chain runs to 357 residues: Peptide chain release factor 1 (357 aa).

Position 233 is an N5-methylglutamine (Gln-233).

Belongs to the prokaryotic/mitochondrial release factor family. Methylated by PrmC. Methylation increases the termination efficiency of RF1.

The protein resides in the cytoplasm. Its function is as follows. Peptide chain release factor 1 directs the termination of translation in response to the peptide chain termination codons UAG and UAA. The chain is Peptide chain release factor 1 from Flavobacterium psychrophilum (strain ATCC 49511 / DSM 21280 / CIP 103535 / JIP02/86).